The sequence spans 395 residues: Elongation factor Tu (395 aa).

One can recognise a tr-type G domain in the interval 10–204 (KPHVNIGTIG…AVDEYIPTPQ (195 aa)). The interval 19–26 (GHVDHGKT) is G1. 19–26 (GHVDHGKT) contacts GTP. Thr-26 contributes to the Mg(2+) binding site. Residues 60-64 (GITIS) form a G2 region. The interval 81-84 (DCPG) is G3. GTP-binding positions include 81–85 (DCPGH) and 136–139 (NKCD). The tract at residues 136 to 139 (NKCD) is G4. The segment at 174–176 (SAL) is G5.

Belongs to the TRAFAC class translation factor GTPase superfamily. Classic translation factor GTPase family. EF-Tu/EF-1A subfamily. In terms of assembly, monomer.

It localises to the cytoplasm. The catalysed reaction is GTP + H2O = GDP + phosphate + H(+). Functionally, GTP hydrolase that promotes the GTP-dependent binding of aminoacyl-tRNA to the A-site of ribosomes during protein biosynthesis. The polypeptide is Elongation factor Tu (Geobacillus stearothermophilus (Bacillus stearothermophilus)).